Reading from the N-terminus, the 366-residue chain is NAD(P)H-quinone oxidoreductase subunit 1, chloroplastic (366 aa).

8 helical membrane passes run 29-49 (WITA…LVIV), 97-117 (LLFS…YLVI), 130-150 (IGVF…FMAG), 166-186 (VAQA…ISLL), 202-222 (FGFW…FLIA), 254-274 (FGLF…FVTV), 307-327 (VIIG…ISIV), and 340-360 (LLNL…LLTA).

The protein belongs to the complex I subunit 1 family. In terms of assembly, NDH is composed of at least 16 different subunits, 5 of which are encoded in the nucleus.

Its subcellular location is the plastid. The protein localises to the chloroplast thylakoid membrane. It carries out the reaction a plastoquinone + NADH + (n+1) H(+)(in) = a plastoquinol + NAD(+) + n H(+)(out). The catalysed reaction is a plastoquinone + NADPH + (n+1) H(+)(in) = a plastoquinol + NADP(+) + n H(+)(out). Its function is as follows. NDH shuttles electrons from NAD(P)H:plastoquinone, via FMN and iron-sulfur (Fe-S) centers, to quinones in the photosynthetic chain and possibly in a chloroplast respiratory chain. The immediate electron acceptor for the enzyme in this species is believed to be plastoquinone. Couples the redox reaction to proton translocation, and thus conserves the redox energy in a proton gradient. The sequence is that of NAD(P)H-quinone oxidoreductase subunit 1, chloroplastic from Anthoceros angustus (Hornwort).